A 311-amino-acid chain; its full sequence is Homeobox-leucine zipper protein HOX1 (311 aa).

2 disordered regions span residues 29–69 (AGGA…SDHR) and 97–160 (AETT…KKLR). Residues 119 to 145 (SSPNSTLSSLSGKRGAPSAATAAAAAA) are compositionally biased toward low complexity. Positions 154–213 (GSRKKLRLSKDQAAVLEDTFKEHNTLNPKQKAALARQLNLKPRQVEVWFQNRRARTKLKQ) form a DNA-binding region, homeobox. The leucine-zipper stretch occupies residues 212–256 (KQTEVDCELLKRCCETLTDENRRLHRELQELRALKLATAAAAPHH). Residues 279–311 (SAATTTRNNSGAAPARPVPTRPWPPAAAQRSSA) form a disordered region. Positions 280–289 (AATTTRNNSG) are enriched in polar residues. Residues 294 to 303 (RPVPTRPWPP) show a composition bias toward pro residues.

It belongs to the HD-ZIP homeobox family. Class II subfamily. As to quaternary structure, homodimer. May form a heterodimer with HOX2, HOX3 or HOX7. Expressed in root provascular and vascular cylinder, provascular and vascular strands of leaves, provascular and vascular strands of the whole panicle, in mature embryo provascular bundles of scutellum and embryonic axis and provascular and vascular strands of young immature spikelet organs. Expressed in differentiating and differentiated xylem and phloem elements, and in outer and inner bundle sheath cells of all vascular bundles. Expressed in auricles, ligules, culm, guard cells brac hairs and pollen.

It is found in the nucleus. In terms of biological role, probable transcription repressor involved leaf development. Binds to the DNA sequence 5'-CAAT[GC]ATTG-3'. May act as a regulatory switch to specify provascular cell fate. The sequence is that of Homeobox-leucine zipper protein HOX1 (HOX1) from Oryza sativa subsp. japonica (Rice).